Here is a 276-residue protein sequence, read N- to C-terminus: MAHYAIGDIQGCFDELTALLGKIGFNHGTDTLWLTGDIVNRGPKSLETLQFCIRHENSVQIVLGNHDLHLLAVGYGEGAPKRSDTIEPILKHPDGRKMLDWLRAQPLLIREGNRVMVHAGILPQWRITKAESLAGEAEAELRGKKYVKFFSKMYGNKPAAWDEGLEGYARLRFIVNAFTRMRALTFKNELDFDYKSTVKKMPLYLRPWFKAPDRQNLDHTIIFGHWSSLGYTNADNVISLDTGALWGGQLTAVNLETEEITQVQAAGGIDWKSFTK.

The protein belongs to the Ap4A hydrolase family.

The enzyme catalyses P(1),P(4)-bis(5'-adenosyl) tetraphosphate + H2O = 2 ADP + 2 H(+). Functionally, hydrolyzes diadenosine 5',5'''-P1,P4-tetraphosphate to yield ADP. The protein is Bis(5'-nucleosyl)-tetraphosphatase, symmetrical (apaH) of Neisseria meningitidis serogroup A / serotype 4A (strain DSM 15465 / Z2491).